Here is a 567-residue protein sequence, read N- to C-terminus: Urease subunit alpha (567 aa).

The Urease domain maps to 129 to 567; it reads GGIDAHIHFI…LPMAQRYFLF (439 aa). The Ni(2+) site is built by H134, H136, and K217. At K217 the chain carries N6-carboxylysine. H219 serves as a coordination point for substrate. 2 residues coordinate Ni(2+): H246 and H272. The active-site Proton donor is the H320. Residue D360 coordinates Ni(2+).

Belongs to the metallo-dependent hydrolases superfamily. Urease alpha subunit family. Heterotrimer of UreA (gamma), UreB (beta) and UreC (alpha) subunits. Three heterotrimers associate to form the active enzyme. Ni cation serves as cofactor. Post-translationally, carboxylation allows a single lysine to coordinate two nickel ions.

Its subcellular location is the cytoplasm. The catalysed reaction is urea + 2 H2O + H(+) = hydrogencarbonate + 2 NH4(+). Its pathway is nitrogen metabolism; urea degradation; CO(2) and NH(3) from urea (urease route): step 1/1. This is Urease subunit alpha from Teredinibacter turnerae (strain ATCC 39867 / T7901).